A 509-amino-acid chain; its full sequence is Glutamate--tRNA ligase (509 aa).

Residues 20-30 carry the 'HIGH' region motif; that stretch reads PSPTGFPHVGT. Cys117, Cys119, Cys144, and His146 together coordinate Zn(2+). The 'KMSKS' region motif lies at 261-265; the sequence is KLSKR. Lys264 provides a ligand contact to ATP.

Belongs to the class-I aminoacyl-tRNA synthetase family. Glutamate--tRNA ligase type 1 subfamily. Monomer. It depends on Zn(2+) as a cofactor.

The protein resides in the cytoplasm. The enzyme catalyses tRNA(Glu) + L-glutamate + ATP = L-glutamyl-tRNA(Glu) + AMP + diphosphate. Catalyzes the attachment of glutamate to tRNA(Glu) in a two-step reaction: glutamate is first activated by ATP to form Glu-AMP and then transferred to the acceptor end of tRNA(Glu). This chain is Glutamate--tRNA ligase, found in Psychrobacter cryohalolentis (strain ATCC BAA-1226 / DSM 17306 / VKM B-2378 / K5).